The primary structure comprises 224 residues: MIGKVAGILDFRGPDHVLIDVRGVGYIVYVSDRTLASMPGLGEGVALYTELVVREDLLQLFGFPTMIEKEWHRLLMTVQGVGAKAGMAILGALGAEGTARAITLGDARSIQAAPGIGPKIAQRVVLELKSKAPALMAMGGGTAALAPSEPPEPEPGTSSGSRRKTRAPEPPRPSHTADALSALANLGYQPTDAAQAVAQAAGESPDADTAALIRAALKLLAPKS.

Residues 1 to 64 (MIGKVAGILD…EDLLQLFGFP (64 aa)) form a domain I region. Residues 65 to 143 (TMIEKEWHRL…ALMAMGGGTA (79 aa)) are domain II. A disordered region spans residues 141–185 (GTAALAPSEPPEPEPGTSSGSRRKTRAPEPPRPSHTADALSALAN). The segment at 144-170 (ALAPSEPPEPEPGTSSGSRRKTRAPEP) is flexible linker. Positions 171–224 (PRPSHTADALSALANLGYQPTDAAQAVAQAAGESPDADTAALIRAALKLLAPKS) are domain III.

Belongs to the RuvA family. In terms of assembly, homotetramer. Forms an RuvA(8)-RuvB(12)-Holliday junction (HJ) complex. HJ DNA is sandwiched between 2 RuvA tetramers; dsDNA enters through RuvA and exits via RuvB. An RuvB hexamer assembles on each DNA strand where it exits the tetramer. Each RuvB hexamer is contacted by two RuvA subunits (via domain III) on 2 adjacent RuvB subunits; this complex drives branch migration. In the full resolvosome a probable DNA-RuvA(4)-RuvB(12)-RuvC(2) complex forms which resolves the HJ.

The protein resides in the cytoplasm. Its function is as follows. The RuvA-RuvB-RuvC complex processes Holliday junction (HJ) DNA during genetic recombination and DNA repair, while the RuvA-RuvB complex plays an important role in the rescue of blocked DNA replication forks via replication fork reversal (RFR). RuvA specifically binds to HJ cruciform DNA, conferring on it an open structure. The RuvB hexamer acts as an ATP-dependent pump, pulling dsDNA into and through the RuvAB complex. HJ branch migration allows RuvC to scan DNA until it finds its consensus sequence, where it cleaves and resolves the cruciform DNA. The protein is Holliday junction branch migration complex subunit RuvA of Cereibacter sphaeroides (strain ATCC 17029 / ATH 2.4.9) (Rhodobacter sphaeroides).